Here is a 198-residue protein sequence, read N- to C-terminus: Protein GrpE (198 aa).

The protein belongs to the GrpE family. As to quaternary structure, homodimer.

The protein localises to the cytoplasm. In terms of biological role, participates actively in the response to hyperosmotic and heat shock by preventing the aggregation of stress-denatured proteins, in association with DnaK and GrpE. It is the nucleotide exchange factor for DnaK and may function as a thermosensor. Unfolded proteins bind initially to DnaJ; upon interaction with the DnaJ-bound protein, DnaK hydrolyzes its bound ATP, resulting in the formation of a stable complex. GrpE releases ADP from DnaK; ATP binding to DnaK triggers the release of the substrate protein, thus completing the reaction cycle. Several rounds of ATP-dependent interactions between DnaJ, DnaK and GrpE are required for fully efficient folding. This Actinobacillus pleuropneumoniae serotype 5b (strain L20) protein is Protein GrpE.